The chain runs to 660 residues: Epithelial sodium channel subunit gamma (660 aa).

Over Met1–Trp55 the chain is Cytoplasmic. A helical membrane pass occupies residues Ile56–Leu76. The Extracellular portion of the chain corresponds to Met77–Gln537. 8 cysteine pairs are disulfide-bonded: Cys101–Cys286, Cys209–Cys217, Cys263–Cys270, Cys375–Cys460, Cys397–Cys456, Cys401–Cys452, Cys410–Cys437, and Cys412–Cys426. A helical transmembrane segment spans residues Leu538–Ile558. Residues Asp559–Leu660 lie on the Cytoplasmic side of the membrane.

It belongs to the amiloride-sensitive sodium channel (TC 1.A.6) family. SCNN1G subfamily. As to quaternary structure, component of the heterotrimeric epithelial sodium channel (ENaC) composed of an alpha/SCNN1A, a beta/SCNN1B and a gamma/SCNN1G subunit.

Its subcellular location is the apical cell membrane. The catalysed reaction is Na(+)(in) = Na(+)(out). Its activity is regulated as follows. Originally identified and characterized by its inhibition by the diuretic drug amiloride. In terms of biological role, this is one of the three pore-forming subunits of the heterotrimeric epithelial sodium channel (ENaC), a critical regulator of sodium balance and fluid homeostasis. ENaC operates in epithelial tissues, where it mediates the electrodiffusion of sodium ions from extracellular fluid through the apical membrane of cells, with water following osmotically. The chain is Epithelial sodium channel subunit gamma (scnn1g-a) from Xenopus laevis (African clawed frog).